Consider the following 958-residue polypeptide: MAFRGPEPWVSASLLRQRLKAEEKTLDLEFEVLSVGFNEAGRYALRLSAENPLQVGSGAGVQLQVNDGDPFPACSAITDVIEQQEPGQSLTLTRSKFIFTLPKGFCKNDGQHDAQLHVEALRLDEPLGRAAQRVGEAIFPIYPRPDQPRMNPKAQDHEDLYRYCGNLALLRASTDPTARHCGSLAYSVAFHVHRGPQPPVSDSPPRAGQPELMSPEEPLIASQSTEPEIGHLSPSKKETIMVTLHGATNLPACKDGSEPWPYVVVKSTSEEKNNQSSKAVTSVTSEPTRAPIWGDTVNVEIQAEDAGQEDVILKVVDNRKKQELLSYKIPIKYLRVFHPYHFELVKPTESGKADEATAKTQLYATVVRKSSFIPRYIGCNHMALEIFLRGVNEPLANNPNPIVVIARVVPNYKEFKVSQANRDLASVGLPITPLSFPIPSMMNFDVPRVSQNGCPQLSKPGGPPEQPLWNQSFLFQGRDGATSFSEDTALVLEYYSSTSMKGSQPWTLNQPLGISVLPLKSRLYQKMLTGKGLDGLHVERLPIMDTSLKTINDEAPTVALSFQLLSSERPENFLTPNNSKALPTLDPKILDKKLRTIQESWSKDTVSSTMDLSTSTPREAEEEPLVPEMSHDTEMNNYRRAMQKMAEDILSLRRQASILEGENRILRSRLAQQEEEEGQGKASEAQNTVSMKQKLLLSELDMKKLRDRVQHLQNELIRKNDREKELLLLYQAQQPQAALLKQYQGKLQKMKALEETVRHQEKVIEKMERVLEDRLQDRSKPPPLNRQQGKPYTGFPMLSASGLPLGSMGENLPVELYSVLLAENAKLRTELDKNRHQQAPIILQQQALPDLLSGTSDKFNLLAKLEHAQSRILSLESQLEDSARRWGREKQDLATRLQEQEKGFRHPSNSIIIEQPSALTHSMDLKQPSELEPLLPSSDSKLNKPLSPQKETANSQQT.

The 140-residue stretch at 214–353 folds into the C2 domain; it reads SPEEPLIASQ…LVKPTESGKA (140 aa). Positions 602–617 are enriched in polar residues; the sequence is SKDTVSSTMDLSTSTP. A disordered region spans residues 602-628; the sequence is SKDTVSSTMDLSTSTPREAEEEPLVPE. Coiled coils occupy residues 632–774 and 859–899; these read DTEM…LEDR and FNLL…RLQE. Positions 899-958 are disordered; that stretch reads EQEKGFRHPSNSIIIEQPSALTHSMDLKQPSELEPLLPSSDSKLNKPLSPQKETANSQQT. 2 stretches are compositionally biased toward polar residues: residues 907 to 920 and 949 to 958; these read PSNS…SALT and QKETANSQQT.

This chain is Coiled-coil domain-containing protein 33 (CCDC33), found in Homo sapiens (Human).